We begin with the raw amino-acid sequence, 58 residues long: uncharacterized protein (58 aa).

2 consecutive 4Fe-4S ferredoxin-type domains span residues 2-27 (GIKILEKCVGCGNCVVFCPRRAIKTY) and 28-57 (GVAIVDENKCSNCGICARYCPINAIKVDTS). [4Fe-4S] cluster contacts are provided by C9, C12, C15, C19, C37, C40, C43, and C47.

It depends on [4Fe-4S] cluster as a cofactor.

In terms of biological role, ferredoxins are iron-sulfur proteins that transfer electrons probably in the CO-dehydrogenase complex. This is an uncharacterized protein from Methanocaldococcus jannaschii (strain ATCC 43067 / DSM 2661 / JAL-1 / JCM 10045 / NBRC 100440) (Methanococcus jannaschii).